The following is a 522-amino-acid chain: F-box only protein 7 (522 aa).

2 disordered regions span residues 1-20 and 85-128; these read MKLRVRLQKRTQPLEVPESE and PNLP…HGQV. A ubiquitin-like region spans residues 1–88; that stretch reads MKLRVRLQKR…EDEMPAPNLP (88 aa). The span at 87–114 shows a compositional bias: polar residues; the sequence is LPSSTDSEHSSLQNNDQPPLAATSSQAN. The tract at residues 92-129 is important for interaction with PINK1; it reads DSEHSSLQNNDQPPLAATSSQANIPDEQGSDSSHGQVT. The important for interaction with CDK6 stretch occupies residues 129-169; it reads TQYDAWTDDSMEGPSHSAEAVSIQDAMSVEEASGFHPLEPM. Residues 180 to 324 form an important for dimerization and interaction with PSMF1 region; sequence PHSLEALYQS…PLLAFTRQVL (145 aa). The region spanning 329–375 is the F-box domain; sequence VFGLVVLPLELKLRIFRLLDVHSVLALSAVCHDLLIASNDPLLWRCL. The tract at residues 381-522 is important for interaction with CDK6; that stretch reads RDSTIRGPDT…RSADNRLPYL (142 aa). Residues arginine 431 and arginine 451 each carry the omega-N-methylarginine modification. Positions 459 to 522 are disordered; that stretch reads DPVTSLIPRP…RSADNRLPYL (64 aa). Residues 481 to 484 carry the RFDP motif motif; that stretch reads RFDP. Arginine 518 bears the Asymmetric dimethylarginine mark.

As to quaternary structure, part of the SCF (SKP1-CUL1-F-box) E3 ubiquitin-protein ligase complex SCF(FBXO7) formed of CUL1, SKP1, RBX1 and FBXO7. Interacts via its C-terminal proline-rich region with DLGAP5. Interacts with BIRC2. Interacts with CDK6 and promotes its interaction with D-type cyclin. Interacts (via the N-terminal Ubl domain) with PRKN. Interacts (via N-terminal region) with PINK1. Interacts with PSMF1.

It is found in the cytoplasm. The protein resides in the nucleus. Its subcellular location is the mitochondrion. The protein localises to the cytosol. The protein operates within protein modification; protein ubiquitination. Its function is as follows. Substrate recognition component of a SCF (SKP1-CUL1-F-box protein) E3 ubiquitin-protein ligase complex which mediates the ubiquitination and subsequent proteasomal degradation of target proteins and plays a role in several biological processes such as cell cycle, cell proliferation, or maintenance of chromosome stability. Recognizes and ubiquitinates BIRC2 and the cell cycle regulator DLGAP5. Plays a role downstream of PINK1 in the clearance of damaged mitochondria via selective autophagy (mitophagy) by targeting PRKN to dysfunctional depolarized mitochondria. Promotes MFN1 ubiquitination. Mediates the ubiquitination and proteasomal degradation of UXT isoform 2, thereby impairing the NF-kappa-B signaling pathway. Inhibits NF-kappa-B pathway also by promoting the ubiquitinatioin of TRAF2. Affects the assembly state and activity of the proteasome in the cells including neurons by ubiquitinating the proteasomal subunit PSMA2 via 'Lys-63'-linked polyubiquitin chains. Promotes 'Lys-48'-linked polyubiquitination SIRT7, leading to the hydrogen peroxide-induced cell death. The chain is F-box only protein 7 (Fbxo7) from Rattus norvegicus (Rat).